The primary structure comprises 461 residues: Photosystem II CP43 reaction center protein (461 aa).

A propeptide spanning residues 1 to 2 (ME) is cleaved from the precursor. T3 carries the post-translational modification N-acetylthreonine. T3 is subject to Phosphothreonine. A run of 5 helical transmembrane segments spans residues 57 to 81 (LFEV…PHLA), 122 to 143 (LIGP…KDKN), 166 to 188 (KALY…RIIT), 243 to 263 (QPWA…LSYS), and 279 to 300 (WFNN…ASQS). E355 is a [CaMn4O5] cluster binding site. Residues 435–459 (RARAAAAGFEKGIDRFNEPTLSLRP) form a helical membrane-spanning segment.

The protein belongs to the PsbB/PsbC family. PsbC subfamily. As to quaternary structure, PSII is composed of 1 copy each of membrane proteins PsbA, PsbB, PsbC, PsbD, PsbE, PsbF, PsbH, PsbI, PsbJ, PsbK, PsbL, PsbM, PsbT, PsbX, PsbY, PsbZ, Psb30/Ycf12, at least 3 peripheral proteins of the oxygen-evolving complex and a large number of cofactors. It forms dimeric complexes. Binds multiple chlorophylls and provides some of the ligands for the Ca-4Mn-5O cluster of the oxygen-evolving complex. It may also provide a ligand for a Cl- that is required for oxygen evolution. PSII binds additional chlorophylls, carotenoids and specific lipids. serves as cofactor.

The protein resides in the plastid. It is found in the chloroplast thylakoid membrane. Functionally, one of the components of the core complex of photosystem II (PSII). It binds chlorophyll and helps catalyze the primary light-induced photochemical processes of PSII. PSII is a light-driven water:plastoquinone oxidoreductase, using light energy to abstract electrons from H(2)O, generating O(2) and a proton gradient subsequently used for ATP formation. In Oedogonium cardiacum (Filamentous green alga), this protein is Photosystem II CP43 reaction center protein.